Consider the following 478-residue polypeptide: ATP-dependent DNA helicase RecQ (478 aa).

One can recognise a Helicase ATP-binding domain in the interval isoleucine 28–glutamate 202. Leucine 41–serine 48 provides a ligand contact to ATP. The DEAH box signature appears at aspartate 142–histidine 145. Residues glutamine 229–proline 380 enclose the Helicase C-terminal domain. Zn(2+) is bound by residues cysteine 447, cysteine 467, cysteine 470, and cysteine 473.

The protein belongs to the helicase family. RecQ subfamily. It depends on Mg(2+) as a cofactor. Zn(2+) serves as cofactor.

The catalysed reaction is Couples ATP hydrolysis with the unwinding of duplex DNA by translocating in the 3'-5' direction.. It carries out the reaction ATP + H2O = ADP + phosphate + H(+). An ATP-dependent DNA helicase which unwinds DNA in a 3'-5' direction. This Synechocystis sp. (strain ATCC 27184 / PCC 6803 / Kazusa) protein is ATP-dependent DNA helicase RecQ.